We begin with the raw amino-acid sequence, 216 residues long: Probable GTP-binding protein EngB (216 aa).

One can recognise an EngB-type G domain in the interval 26 to 200 (EGIEIAFAGR…RAKLDTWFAP (175 aa)). GTP contacts are provided by residues 34-41 (GRSNAGKS), 61-65 (GRTQL), 79-82 (DLPG), 146-149 (TKAD), and 179-181 (YSS). Positions 41 and 63 each coordinate Mg(2+).

Belongs to the TRAFAC class TrmE-Era-EngA-EngB-Septin-like GTPase superfamily. EngB GTPase family. Mg(2+) serves as cofactor.

Functionally, necessary for normal cell division and for the maintenance of normal septation. The sequence is that of Probable GTP-binding protein EngB from Vibrio vulnificus (strain CMCP6).